Here is a 515-residue protein sequence, read N- to C-terminus: RNA exonuclease NGL2 (515 aa).

2 disordered regions span residues 1-54 (MTQD…SKPI) and 353-381 (RDGEEGADDEEGGNIEKYGKDQPESPVPE). The segment covering 21–34 (EINKSVKDAKHQTN) has biased composition (basic and acidic residues). Positions 40–52 (QHKKKGKKGKKSK) are enriched in basic residues. The span at 369–381 (KYGKDQPESPVPE) shows a compositional bias: basic and acidic residues.

It belongs to the CCR4/nocturin family.

It is found in the cytoplasm. The protein localises to the nucleus. Involved in pre-rRNA processing. Required for the final stage of 3'-end maturation of 5.8S rRNA at site E. The protein is RNA exonuclease NGL2 (NGL2) of Saccharomyces cerevisiae (strain ATCC 204508 / S288c) (Baker's yeast).